The chain runs to 161 residues: SsrA-binding protein (161 aa).

The segment at 138–161 is disordered; it reads DKRTDSKEKDWNRDKARIMKSSLR. Residues 139–154 are compositionally biased toward basic and acidic residues; the sequence is KRTDSKEKDWNRDKAR.

The protein belongs to the SmpB family.

The protein localises to the cytoplasm. Required for rescue of stalled ribosomes mediated by trans-translation. Binds to transfer-messenger RNA (tmRNA), required for stable association of tmRNA with ribosomes. tmRNA and SmpB together mimic tRNA shape, replacing the anticodon stem-loop with SmpB. tmRNA is encoded by the ssrA gene; the 2 termini fold to resemble tRNA(Ala) and it encodes a 'tag peptide', a short internal open reading frame. During trans-translation Ala-aminoacylated tmRNA acts like a tRNA, entering the A-site of stalled ribosomes, displacing the stalled mRNA. The ribosome then switches to translate the ORF on the tmRNA; the nascent peptide is terminated with the 'tag peptide' encoded by the tmRNA and targeted for degradation. The ribosome is freed to recommence translation, which seems to be the essential function of trans-translation. This Aliivibrio fischeri (strain MJ11) (Vibrio fischeri) protein is SsrA-binding protein.